Here is a 707-residue protein sequence, read N- to C-terminus: Potassium-transporting ATPase ATP-binding subunit (707 aa).

Residues 1-11 (MNTDTQKHEDA) show a composition bias toward basic and acidic residues. The segment at 1-37 (MNTDTQKHEDAMSTTTPARAPHDDAPSGQQPGQGRVG) is disordered. 4 helical membrane-spanning segments follow: residues 61-81 (VMAK…TTAF), 89-109 (WFGW…NLAE), 238-258 (IALN…CATL), and 271-291 (MIVL…ALLS). D326 functions as the 4-aspartylphosphate intermediate in the catalytic mechanism. Residues D363, E367, 397 to 404 (FTAQTRMS), and K415 each bind ATP. Mg(2+)-binding residues include D542 and D546. 3 consecutive transmembrane segments (helical) span residues 612–632 (FAII…LNIM), 640–660 (AILS…PLAL), and 683–703 (LGGL…VSLI).

This sequence belongs to the cation transport ATPase (P-type) (TC 3.A.3) family. Type IA subfamily. As to quaternary structure, the system is composed of three essential subunits: KdpA, KdpB and KdpC.

It is found in the cell membrane. The catalysed reaction is K(+)(out) + ATP + H2O = K(+)(in) + ADP + phosphate + H(+). Part of the high-affinity ATP-driven potassium transport (or Kdp) system, which catalyzes the hydrolysis of ATP coupled with the electrogenic transport of potassium into the cytoplasm. This subunit is responsible for energy coupling to the transport system and for the release of the potassium ions to the cytoplasm. The polypeptide is Potassium-transporting ATPase ATP-binding subunit (Streptomyces coelicolor (strain ATCC BAA-471 / A3(2) / M145)).